Here is a 183-residue protein sequence, read N- to C-terminus: MTDSEYSSAADAVANLVRRVPGFPSEGVVFEDLTPVLADAGAFRLIVDELAEAARSYHADIIGGLDARGFLLGSAVAYQLGLGILAVRKEGKLPPPVFHRGYDLEYGHAALEIPREGLNIQGKNIVLIDDVLATGGTLCASRALLEEAGANVAGLAVILEVEALEGRKRLADLPLTVVGERSE.

It belongs to the purine/pyrimidine phosphoribosyltransferase family. As to quaternary structure, homodimer.

It localises to the cytoplasm. It carries out the reaction AMP + diphosphate = 5-phospho-alpha-D-ribose 1-diphosphate + adenine. It participates in purine metabolism; AMP biosynthesis via salvage pathway; AMP from adenine: step 1/1. Catalyzes a salvage reaction resulting in the formation of AMP, that is energically less costly than de novo synthesis. The protein is Adenine phosphoribosyltransferase of Corynebacterium kroppenstedtii (strain DSM 44385 / JCM 11950 / CIP 105744 / CCUG 35717).